A 607-amino-acid polypeptide reads, in one-letter code: Fucose-1-phosphate guanylyltransferase (607 aa).

A disordered region spans residues 1-21 (MRAVRRGLREGGAMAAARDPP).

Expressed in many tissues.

It is found in the cytoplasm. The enzyme catalyses beta-L-fucose 1-phosphate + GTP + H(+) = GDP-beta-L-fucose + diphosphate. Functionally, catalyzes the formation of GDP-L-fucose from GTP and L-fucose-1-phosphate. Functions as a salvage pathway to reutilize L-fucose arising from the turnover of glycoproteins and glycolipids. This chain is Fucose-1-phosphate guanylyltransferase, found in Homo sapiens (Human).